Reading from the N-terminus, the 160-residue chain is Troponin C, skeletal muscle (160 aa).

T2 carries the post-translational modification N-acetylthreonine. EF-hand domains are found at residues 15 to 50 (EMIA…LGQT), 51 to 86 (PTKE…QMKE), 91 to 126 (KSEE…SGEH), and 127 to 160 (VTEE…EGVQ). Residues D28, D30, D34, E39, D64, D66, S68, T70, E75, D104, N106, D108, Y110, E115, D140, N142, D144, R146, and E151 each coordinate Ca(2+).

It belongs to the troponin C family. In terms of tissue distribution, fast skeletal muscle.

In terms of biological role, troponin is the central regulatory protein of striated muscle contraction. Tn consists of three components: Tn-I which is the inhibitor of actomyosin ATPase, Tn-T which contains the binding site for tropomyosin and Tn-C. The binding of calcium to Tn-C abolishes the inhibitory action of Tn on actin filaments. The polypeptide is Troponin C, skeletal muscle (Tnnc2) (Mus musculus (Mouse)).